Reading from the N-terminus, the 102-residue chain is Small ribosomal subunit protein uS10 (102 aa).

This sequence belongs to the universal ribosomal protein uS10 family. Part of the 30S ribosomal subunit.

Involved in the binding of tRNA to the ribosomes. This is Small ribosomal subunit protein uS10 from Planobispora rosea.